The following is a 72-amino-acid chain: UPF0352 protein HI_0840 (72 aa).

Belongs to the UPF0352 family.

This chain is UPF0352 protein HI_0840, found in Haemophilus influenzae (strain ATCC 51907 / DSM 11121 / KW20 / Rd).